We begin with the raw amino-acid sequence, 275 residues long: MPELPEVEVTRRGIAPFVAGRRVERVDVRTAMLRWPVPADLAEQLRAREVLAVERRGKYLLFEVDAGWFIVHLGMTGTLRVLPVAGVPVAAKHDHIDWIFDEFVLRFRDPRRFGAVLWHPREAGDVHAHPLLASLGVEPFSPAFTGALLHARTRGRTVSVKQALLAGDMVVGVGNIYASESLFRAGIRPTTAAGKVSLPRYERLADAVRATLADAIERGGSTLRDFVGSNGESGYFQLDCFAYDRAGLPCRVCGTPIRQIVQGQRSTYFCPTCQR.

Proline 2 acts as the Schiff-base intermediate with DNA in catalysis. Residue glutamate 3 is the Proton donor of the active site. The active-site Proton donor; for beta-elimination activity is lysine 58. Positions 93, 111, and 156 each coordinate DNA. The segment at 241 to 275 adopts an FPG-type zinc-finger fold; it reads FAYDRAGLPCRVCGTPIRQIVQGQRSTYFCPTCQR. Residue arginine 265 is the Proton donor; for delta-elimination activity of the active site.

It belongs to the FPG family. As to quaternary structure, monomer. Zn(2+) serves as cofactor.

It carries out the reaction Hydrolysis of DNA containing ring-opened 7-methylguanine residues, releasing 2,6-diamino-4-hydroxy-5-(N-methyl)formamidopyrimidine.. The enzyme catalyses 2'-deoxyribonucleotide-(2'-deoxyribose 5'-phosphate)-2'-deoxyribonucleotide-DNA = a 3'-end 2'-deoxyribonucleotide-(2,3-dehydro-2,3-deoxyribose 5'-phosphate)-DNA + a 5'-end 5'-phospho-2'-deoxyribonucleoside-DNA + H(+). In terms of biological role, involved in base excision repair of DNA damaged by oxidation or by mutagenic agents. Acts as a DNA glycosylase that recognizes and removes damaged bases. Has a preference for oxidized purines, such as 7,8-dihydro-8-oxoguanine (8-oxoG). Has AP (apurinic/apyrimidinic) lyase activity and introduces nicks in the DNA strand. Cleaves the DNA backbone by beta-delta elimination to generate a single-strand break at the site of the removed base with both 3'- and 5'-phosphates. In Burkholderia vietnamiensis (strain G4 / LMG 22486) (Burkholderia cepacia (strain R1808)), this protein is Formamidopyrimidine-DNA glycosylase.